A 509-amino-acid polypeptide reads, in one-letter code: ATP synthase subunit alpha (509 aa).

Position 169–176 (169–176 (GDRQTGKT)) interacts with ATP.

The protein belongs to the ATPase alpha/beta chains family. F-type ATPases have 2 components, CF(1) - the catalytic core - and CF(0) - the membrane proton channel. CF(1) has five subunits: alpha(3), beta(3), gamma(1), delta(1), epsilon(1). CF(0) has three main subunits: a(1), b(2) and c(9-12). The alpha and beta chains form an alternating ring which encloses part of the gamma chain. CF(1) is attached to CF(0) by a central stalk formed by the gamma and epsilon chains, while a peripheral stalk is formed by the delta and b chains.

The protein localises to the cell inner membrane. The catalysed reaction is ATP + H2O + 4 H(+)(in) = ADP + phosphate + 5 H(+)(out). Produces ATP from ADP in the presence of a proton gradient across the membrane. The alpha chain is a regulatory subunit. This Brucella anthropi (strain ATCC 49188 / DSM 6882 / CCUG 24695 / JCM 21032 / LMG 3331 / NBRC 15819 / NCTC 12168 / Alc 37) (Ochrobactrum anthropi) protein is ATP synthase subunit alpha.